The primary structure comprises 1704 residues: Phospholipid-transporting ATPase ABCA3 (1704 aa).

Residue N14 is glycosylated (N-linked (GlcNAc...) asparagine). The helical transmembrane segment at V22 to L42 threads the bilayer. N-linked (GlcNAc...) asparagine glycosylation is found at N53, N124, and N140. 6 helical membrane passes run Y261 to V283, A307 to F327, S344 to V364, M373 to A393, L405 to F425, and F447 to T467. Residues I530 to V763 form the ABC transporter 1 domain. Residue G566–T573 participates in ATP binding. N-linked (GlcNAc...) asparagine glycosylation is found at N620 and N783. 7 consecutive transmembrane segments (helical) span residues M925 to N945, I1100 to V1120, S1144 to F1164, L1183 to F1203, L1213 to I1233, L1245 to Y1265, and F1306 to T1326. The ABC transporter 2 domain maps to L1381 to K1614. An ATP-binding site is contributed by G1416–T1423.

The protein belongs to the ABC transporter superfamily. ABCA family. Homooligomer; disulfide-linked. In terms of processing, N-glycosylated. Localization at intracellular vesicles is accompanied by processing of oligosaccharide from high mannose type to complex type. N-linked glycosylation at Asn-124 and Asn-140 is required for stability and efficient anterograde trafficking and prevents from proteasomal degradation. Post-translationally, proteolytically cleaved by CTSL and to a lower extent by CTSB within multivesicular bodies (MVB) and lamellar bodies (LB) leading to a mature form of 150 kDa. Expressed in brain, pancreas, skeletal muscle and heart. Highly expressed in the lung in an AT2-cell-specific manner. Weakly expressed in placenta, kidney and liver. Also expressed in medullary thyroid carcinoma cells (MTC) and in C-cell carcinoma.

Its subcellular location is the endosome. It localises to the multivesicular body membrane. The protein localises to the cytoplasmic vesicle membrane. The protein resides in the late endosome membrane. It is found in the lysosome membrane. The catalysed reaction is ATP + H2O + xenobioticSide 1 = ADP + phosphate + xenobioticSide 2.. The enzyme catalyses a 1,2-diacyl-sn-glycero-3-phosphocholine(in) + ATP + H2O = a 1,2-diacyl-sn-glycero-3-phosphocholine(out) + ADP + phosphate + H(+). It carries out the reaction ATP + H2O + phospholipidSide 1 = ADP + phosphate + phospholipidSide 2.. It catalyses the reaction 1,2-dihexadecanoyl-sn-glycero-3-phosphocholine(in) + ATP + H2O = 1,2-dihexadecanoyl-sn-glycero-3-phosphocholine(out) + ADP + phosphate + H(+). The catalysed reaction is cholesterol(in) + ATP + H2O = cholesterol(out) + ADP + phosphate + H(+). The enzyme catalyses a 1,2-diacyl-sn-glycero-3-phospho-(1'-sn-glycerol)(in) + ATP + H2O = a 1,2-diacyl-sn-glycero-3-phospho-(1'-sn-glycerol)(out) + ADP + phosphate + H(+). Its activity is regulated as follows. The ATP-dependent phosphatidylcholine transport is competitively inhibited by miltefosine. Catalyzes the ATP-dependent transport of phospholipids such as phosphatidylcholine and phosphoglycerol from the cytoplasm into the lumen side of lamellar bodies, in turn participates in the lamellar bodies biogenesis and homeostasis of pulmonary surfactant. Transports preferentially phosphatidylcholine containing short acyl chains. In addition plays a role as an efflux transporter of miltefosine across macrophage membranes and free cholesterol (FC) through intralumenal vesicles by removing FC from the cell as a component of surfactant and protects cells from free cholesterol toxicity. In Homo sapiens (Human), this protein is Phospholipid-transporting ATPase ABCA3.